Reading from the N-terminus, the 385-residue chain is MAEAGVAAASLFGADRRLCSADILPPAEVRARIEVAVLNFLAALTDPAAPAISALPLISRGAANRGLRRALLRDDVSSVYLSYASCKRSLTRANDAKAFVRVWKVMEMCYKILGEGKLVTLRELFYTLLSESPTYFTCQRHVNQTVQDVVSLLRCTRQSLGIMASSRGALIGRLVLQGPEEEHVDCSILGPSGHAITGDLNVLSKLIFSSDARYIIVVEKDAIFQRLAEDRIYSHLPCILITAKGYPDLATRFILHRLSQTYPNMPIFALVDWNPAGLAILCTYKYGSISMGLESYRYACNVKWLGLRGDDLQLIPQSAYQELKPRDLQIAKSLLSSKFLQDKHRAELTLMLETGKRAEIEALYSHGFDFLGKYVARKIVQGDYI.

A Topo IIA-type catalytic domain is found at 24–169 (LPPAEVRARI…LGIMASSRGA (146 aa)). The active-site O-(5'-phospho-DNA)-tyrosine intermediate is the tyrosine 126. Glutamate 219 and aspartate 272 together coordinate Mg(2+).

Belongs to the TOP6A family. In terms of assembly, interacts with TOP6B. The cofactor is Mg(2+). Highly expressed in flowers before pollination. Expressed in roots and shoots.

It localises to the nucleus. It carries out the reaction ATP-dependent breakage, passage and rejoining of double-stranded DNA.. In terms of biological role, required for meiotic recombination. Mediates DNA cleavage that forms the double-strand breaks (DSB) that initiate meiotic recombination. In Oryza sativa subsp. indica (Rice), this protein is Meiotic recombination protein SPO11-2 (SPO11-2).